The primary structure comprises 412 residues: Serine hydroxymethyltransferase (412 aa).

(6S)-5,6,7,8-tetrahydrofolate-binding positions include leucine 119 and 123 to 125; that span reads GHL. Lysine 228 is subject to N6-(pyridoxal phosphate)lysine.

Belongs to the SHMT family. As to quaternary structure, homodimer. Pyridoxal 5'-phosphate serves as cofactor.

The protein localises to the cytoplasm. The catalysed reaction is (6R)-5,10-methylene-5,6,7,8-tetrahydrofolate + glycine + H2O = (6S)-5,6,7,8-tetrahydrofolate + L-serine. It functions in the pathway one-carbon metabolism; tetrahydrofolate interconversion. Its pathway is amino-acid biosynthesis; glycine biosynthesis; glycine from L-serine: step 1/1. In terms of biological role, catalyzes the reversible interconversion of serine and glycine with tetrahydrofolate (THF) serving as the one-carbon carrier. This reaction serves as the major source of one-carbon groups required for the biosynthesis of purines, thymidylate, methionine, and other important biomolecules. Also exhibits THF-independent aldolase activity toward beta-hydroxyamino acids, producing glycine and aldehydes, via a retro-aldol mechanism. The sequence is that of Serine hydroxymethyltransferase from Thermodesulfovibrio yellowstonii (strain ATCC 51303 / DSM 11347 / YP87).